Reading from the N-terminus, the 506-residue chain is MPAAAVQEAVGVCSYGMQLSWDINDPQMPQELALFDQFREWPDGYVRFIYSSDEKKAQRHLSGWAMRNTNNHNGHILKKSCLGVVVCTQACTLPDGSRLQLRPAICDKARLKQQKKACPNCHSALELIPCRGHSGYPVTNFWRLDGNAIFFQAKGVHDHPRPESKSETEARRSAIKRQMASFYQPQKKRIRESEAEENQDSSGHFSNIPPLENPEDFDIVTETSFPIPGQPCPSFPKSDVYKATCDLATFQGDKMPPFQKYSSPRIYLPRPPCSYELANPGYTNSSPYPTLYKDSTSIPNDTDWVHLNTLQCNVNSYSSYERSFDFTNKQHGWKPALGKPSLVERTNHGQFQAMATRPYYNPELPCRYLTTPPPGAPALQTVITTTTKVSYQAYQPPAMKYSDSVREVKSLSSCNYAPEDTGMSVYPEPWGPPVTVTRAASPSGPPPMKIAGDCRAIRPTVAIPHEPVSSRTDEAETWDVCLSGLGSAVSYSDRVGPFFTYNNEDF.

A DNA-binding region (GCM) is located at residues 19-174 (LSWDINDPQM…KSETEARRSA (156 aa)). Zn(2+) contacts are provided by Cys-81, Cys-87, Cys-91, Cys-118, Cys-121, Cys-130, His-157, and His-159. A compositionally biased stretch (basic and acidic residues) spans 155-172 (GVHDHPRPESKSETEARR). Residues 155 to 213 (GVHDHPRPESKSETEARRSAIKRQMASFYQPQKKRIRESEAEENQDSSGHFSNIPPLEN) form a disordered region. A C-terminal conserved inhibitory domain (CCID) region spans residues 379 to 395 (LQTVITTTTKVSYQAYQ).

The protein localises to the nucleus. Its function is as follows. Transcription factor that binds specific sequences on gene promoters and activate their transcription. Through the regulation of gene transcription, may play a role in parathyroid gland development. The chain is Chorion-specific transcription factor GCMb from Homo sapiens (Human).